Reading from the N-terminus, the 310-residue chain is tRNA-dihydrouridine(16) synthase (310 aa).

FMN-binding positions include 7–9 (PMQ) and Gln-68. Cys-98 serves as the catalytic Proton donor. FMN contacts are provided by residues Lys-139, 200–202 (NGE), and 224–225 (GR).

It belongs to the Dus family. DusC subfamily. FMN is required as a cofactor.

The enzyme catalyses 5,6-dihydrouridine(16) in tRNA + NADP(+) = uridine(16) in tRNA + NADPH + H(+). The catalysed reaction is 5,6-dihydrouridine(16) in tRNA + NAD(+) = uridine(16) in tRNA + NADH + H(+). In terms of biological role, catalyzes the synthesis of 5,6-dihydrouridine (D), a modified base found in the D-loop of most tRNAs, via the reduction of the C5-C6 double bond in target uridines. Specifically modifies U16 in tRNAs. The chain is tRNA-dihydrouridine(16) synthase from Haemophilus influenzae (strain ATCC 51907 / DSM 11121 / KW20 / Rd).